A 644-amino-acid chain; its full sequence is Chaperone protein DnaK (644 aa).

Position 199 is a phosphothreonine; by autocatalysis (Thr199). Residues 602–644 form a disordered region; it reads IYAKKSSEGQTAQGQTQSQESTKPAEEGVVDAEFEEVKEEDKK. Residues 609-623 are compositionally biased toward polar residues; the sequence is EGQTAQGQTQSQEST. Residues 629-644 show a composition bias toward acidic residues; that stretch reads GVVDAEFEEVKEEDKK.

Belongs to the heat shock protein 70 family.

In terms of biological role, acts as a chaperone. The protein is Chaperone protein DnaK of Legionella pneumophila (strain Lens).